Here is a 185-residue protein sequence, read N- to C-terminus: Elongation factor P (185 aa).

The protein belongs to the elongation factor P family.

Its subcellular location is the cytoplasm. Its pathway is protein biosynthesis; polypeptide chain elongation. Its function is as follows. Involved in peptide bond synthesis. Stimulates efficient translation and peptide-bond synthesis on native or reconstituted 70S ribosomes in vitro. Probably functions indirectly by altering the affinity of the ribosome for aminoacyl-tRNA, thus increasing their reactivity as acceptors for peptidyl transferase. The chain is Elongation factor P from Trichormus variabilis (strain ATCC 29413 / PCC 7937) (Anabaena variabilis).